A 396-amino-acid chain; its full sequence is L-lactate dehydrogenase (396 aa).

Positions 1-380 constitute an FMN hydroxy acid dehydrogenase domain; it reads MIISAASDYR…SGDSLVQELG (380 aa). Tyr-24 provides a ligand contact to substrate. Residues Ser-106 and Gln-127 each contribute to the FMN site. Tyr-129 provides a ligand contact to substrate. Thr-155 is a binding site for FMN. Position 164 (Arg-164) interacts with substrate. An FMN-binding site is contributed by Lys-251. The active-site Proton acceptor is His-275. Arg-278 contacts substrate. 306–330 provides a ligand contact to FMN; it reads DSGIRNGLDVVRMIALGADTVLLGR.

Belongs to the FMN-dependent alpha-hydroxy acid dehydrogenase family. Requires FMN as cofactor.

The protein localises to the cell inner membrane. It carries out the reaction (S)-lactate + A = pyruvate + AH2. Functionally, catalyzes the conversion of L-lactate to pyruvate. Is coupled to the respiratory chain. This chain is L-lactate dehydrogenase, found in Salmonella choleraesuis (strain SC-B67).